The following is a 361-amino-acid chain: MHCSCLAEGIPANPGNWISGLAFPDWAYKAESSPGSRQIQLWHFILELLQKEEFRHVIAWQQGEYGEFVIKDPDEVARLWGRRKCKPQMNYDKLSRALRYYYNKRILHKTKGKRFTYKFNFSKLIVVNYPLWEVRAPPSPHLLLGAPALCRPALVPVGVQSELLHSMLFAHQAMVEQLTGQQTPRGPPETSGDKKGSSSSVYRLGSAPGPCRLGLCCHLGSVQGELPGVASFTPPLPPPLPSNWTCLSGPFLPPLPSEQQLPGAFKPDILLPGPRSLPGAWHFPGLPLLAGLGQGAGERLWLLSLRPEGLEVKPAPMMEAKGGLDPREVFCPETRRLKTGEESLTSPNLENLKAVWPLDPP.

A DNA-binding region (ETS) is located at residues 39–120 (IQLWHFILEL…KGKRFTYKFN (82 aa)). The tract at residues 178–201 (LTGQQTPRGPPETSGDKKGSSSSV) is disordered.

Belongs to the ETS family.

The protein localises to the nucleus. Transcriptional regulator. The chain is ETS translocation variant 3-like protein (ETV3L) from Homo sapiens (Human).